The primary structure comprises 713 residues: Fibroblast growth factor receptor 4 (713 aa).

Residues methionine 1 to serine 20 form the signal peptide. The interval histidine 21–tyrosine 54 is disordered. The Extracellular segment spans residues histidine 21 to aspartate 281. A compositionally biased stretch (basic and acidic residues) spans aspartate 42–tyrosine 54. 2 Ig-like C2-type domains span residues proline 59 to aspartate 152 and proline 161 to threonine 261. A disulfide bridge connects residues cysteine 84 and cysteine 136. N-linked (GlcNAc...) asparagine glycosylation is found at asparagine 133, asparagine 170, asparagine 202, asparagine 223, and asparagine 234. An intrachain disulfide couples cysteine 183 to cysteine 245. The helical transmembrane segment at isoleucine 282 to cysteine 302 threads the bilayer. Over arginine 303–threonine 713 the chain is Cytoplasmic. The region spanning leucine 379–leucine 667 is the Protein kinase domain. ATP-binding positions include leucine 385–valine 393 and lysine 415. Aspartate 524 serves as the catalytic Proton acceptor. Residues tyrosine 554, tyrosine 555, and tyrosine 666 each carry the phosphotyrosine; by autocatalysis modification.

This sequence belongs to the protein kinase superfamily. Tyr protein kinase family. Fibroblast growth factor receptor subfamily. Monomer. Homodimer after ligand binding. Interacts with FGF1, FGF2, FGF4, FGF6, FGF8, FGF9, FGF16, FGF17, FGF18, FGF19, FGF21 and FGF23 (in vitro). Binding affinity for FGF family members is enhanced by interactions between FGFs and heparan sulfate proteoglycans. Interacts with KLB; this strongly increases the affinity for FGF19 and FGF23. Affinity for FGF19 is strongly increased by KLB and sulfated glycosaminoglycans. KLB and KL both interact with the core-glycosylated FGFR4 in the endoplasmic reticulum and promote its degradation, so that only FGFR4 with fully mature N-glycans is expressed at the cell surface. Identified in a complex with NCAM1, CDH2, PLCG1, FRS2, SRC, SHC1, GAP43 and CTTN. Interacts with MMP14 and HIP1. Interacts with STAT3. N-glycosylated. Full maturation of the glycan chains in the Golgi is essential for high affinity interaction with FGF19. In terms of processing, ubiquitinated. Subject to proteasomal degradation when not fully glycosylated. Post-translationally, autophosphorylated. Binding of FGF family members together with heparan sulfate proteoglycan or heparin promotes receptor dimerization and autophosphorylation on tyrosine residues. Autophosphorylation occurs in trans between the two FGFR molecules present in the dimer.

The protein localises to the cell membrane. Its subcellular location is the endosome. It localises to the endoplasmic reticulum. The catalysed reaction is L-tyrosyl-[protein] + ATP = O-phospho-L-tyrosyl-[protein] + ADP + H(+). With respect to regulation, present in an inactive conformation in the absence of bound ligand. Ligand binding leads to dimerization and activation by autophosphorylation on tyrosine residues. In terms of biological role, tyrosine-protein kinase that acts as a cell-surface receptor for fibroblast growth factors and plays a role in the regulation of cell proliferation, differentiation and migration, and in regulation of lipid metabolism, bile acid biosynthesis, glucose uptake, vitamin D metabolism and phosphate homeostasis. Required for normal down-regulation of the expression of CYP7A1, the rate-limiting enzyme in bile acid synthesis, in response to FGF19. Phosphorylates PLCG1 and FRS2. Ligand binding leads to the activation of several signaling cascades. Activation of PLCG1 leads to the production of the cellular signaling molecules diacylglycerol and inositol 1,4,5-trisphosphate. Phosphorylation of FRS2 triggers recruitment of GRB2, GAB1, PIK3R1 and SOS1, and mediates activation of RAS, MAPK1/ERK2, MAPK3/ERK1 and the MAP kinase signaling pathway, as well as of the AKT1 signaling pathway. Promotes SRC-dependent phosphorylation of the matrix protease MMP14 and its lysosomal degradation. FGFR4 signaling is down-regulated by receptor internalization and degradation; MMP14 promotes internalization and degradation of FGFR4. The polypeptide is Fibroblast growth factor receptor 4 (FGFR4) (Coturnix coturnix (Common quail)).